A 761-amino-acid chain; its full sequence is Prolyl endopeptidase FAP (761 aa).

The Cytoplasmic portion of the chain corresponds to 1–4 (MKTW). A helical; Signal-anchor for type II membrane protein membrane pass occupies residues 5 to 25 (LKTVFGVTTLAALALVVICIV). The Extracellular portion of the chain corresponds to 26 to 761 (LRPSRVYKPE…FLKQCFSLSD (736 aa)). Residues N49, N92, and N99 are each glycosylated (N-linked (GlcNAc...) asparagine). Positions 203 and 204 each coordinate substrate. N227 and N314 each carry an N-linked (GlcNAc...) asparagine glycan. 3 disulfides stabilise this stretch: C321–C332, C438–C441, and C448–C466. The Charge relay system role is filled by S624. The cysteines at positions 643 and 756 are disulfide-linked. N-linked (GlcNAc...) asparagine glycosylation is present at N679. Active-site charge relay system residues include D702 and H734.

The protein belongs to the peptidase S9B family. In terms of assembly, homodimer; homodimerization is required for activity of both plasma membrane and soluble forms. The monomer is inactive. Heterodimer with DPP4. Interacts with PLAUR; the interaction occurs at the cell surface of invadopodia membranes. Interacts with ITGB1. Interacts with ITGA3. Associates with integrin alpha-3/beta-1; the association occurs in a collagen-dependent manner at the cell surface of invadopodia membranes. N-glycosylated. In terms of processing, the N-terminus may be blocked. As to expression, expressed strongly in uterus, pancreas, submaxillary gland and skin, less in lymph node, ovary, skeletal muscle, adrenal and bone marrow. Expressed in reactive stromal fibroblast in epithelial cancers. Expressed in melanocytes but not melanomas (at protein level). Detected in fibroblasts, in placenta, uterus, embryos from day 7-19 and in newborn mice (P1).

It localises to the cell surface. The protein resides in the cell membrane. It is found in the cell projection. The protein localises to the lamellipodium membrane. Its subcellular location is the invadopodium membrane. It localises to the ruffle membrane. The protein resides in the membrane. It is found in the secreted. It carries out the reaction Hydrolysis of Pro-|-Xaa &gt;&gt; Ala-|-Xaa in oligopeptides.. It catalyses the reaction Release of an N-terminal dipeptide, Xaa-Yaa-|-Zaa-, from a polypeptide, preferentially when Yaa is Pro, provided Zaa is neither Pro nor hydroxyproline.. Gelatinase activity is inhibited by serine-protease inhibitors, such as phenylmethylsulfonyl fluoride (PMSF), 4-(2-aminoethyl)-benzenesulfonyl fluoride hydrochloride (AEBSF), 4-amidino phenylsulfonyl fluoride (APSF) and diisopropyl fluorophosphate (DFP), N-ethylmaleimide (NEM) and phenylmethylsulfonyl fluoride (PMSF). Dipeptidyl peptidase activity is inhibited by 2,2'-azino-bis(3-ethylbenzthiazoline-6-sulfonic acid), diisopropylfluorophosphate (DFP). Prolyl endopeptidase activity is inhibited by the boronic acid peptide Ac-Gly-BoroPro, Ac-Gly-Pro-chloromethyl ketone and Thr-Ser-Gly-chloromethyl ketone. Functionally, cell surface glycoprotein serine protease that participates in extracellular matrix degradation and involved in many cellular processes including tissue remodeling, fibrosis, wound healing, inflammation and tumor growth. Both plasma membrane and soluble forms exhibit post-proline cleaving endopeptidase activity, with a marked preference for Ala/Ser-Gly-Pro-Ser/Asn/Ala consensus sequences, on substrate such as alpha-2-antiplasmin SERPINF2 and SPRY2. Degrade also gelatin, heat-denatured type I collagen, but not native collagen type I and IV, vibronectin, tenascin, laminin, fibronectin, fibrin or casein. Also has dipeptidyl peptidase activity, exhibiting the ability to hydrolyze the prolyl bond two residues from the N-terminus of synthetic dipeptide substrates provided that the penultimate residue is proline, with a preference for Ala-Pro, Ile-Pro, Gly-Pro, Arg-Pro and Pro-Pro. Natural neuropeptide hormones for dipeptidyl peptidase are the neuropeptide Y (NPY), peptide YY (PYY), substance P (TAC1) and brain natriuretic peptide 32 (NPPB). The plasma membrane form, in association with either DPP4, PLAUR or integrins, is involved in the pericellular proteolysis of the extracellular matrix (ECM), and hence promotes cell adhesion, migration and invasion through the ECM. Plays a role in tissue remodeling during development and wound healing. Participates in the cell invasiveness towards the ECM in malignant melanoma cancers. Enhances tumor growth progression by increasing angiogenesis, collagen fiber degradation and apoptosis and by reducing antitumor response of the immune system. Promotes glioma cell invasion through the brain parenchyma by degrading the proteoglycan brevican. Acts as a tumor suppressor in melanocytic cells through regulation of cell proliferation and survival in a serine protease activity-independent manner. This Mus musculus (Mouse) protein is Prolyl endopeptidase FAP.